We begin with the raw amino-acid sequence, 216 residues long: Regulator of G-protein signaling 19 (216 aa).

Positions M1 to R19 are enriched in basic and acidic residues. The disordered stretch occupies residues M1 to P30. A phosphoserine mark is found at S24 and S97. An RGS domain is found at S90–L206. S151 is subject to Phosphoserine; by MAPK1 and MAPK3. The interval L207 to A216 is interaction with GIPC.

Interacts with GIPC PDZ domain. Interacts with GNAO1. Fatty acylated. Heavily palmitoylated in the cysteine string motif. In terms of processing, phosphorylated, mainly on serine residues.

Its subcellular location is the membrane. Its function is as follows. Inhibits signal transduction by increasing the GTPase activity of G protein alpha subunits thereby driving them into their inactive GDP-bound form. Binds to G-alpha subfamily 1 members, with the order G(i)a3 &gt; G(i)a1 &gt; G(o)a &gt;&gt; G(z)a/G(i)a2. Activity on G(z)-alpha is inhibited by phosphorylation and palmitoylation of the G-protein. The protein is Regulator of G-protein signaling 19 (Rgs19) of Mus musculus (Mouse).